The sequence spans 403 residues: CCA-adding enzyme (403 aa).

2 residues coordinate ATP: G32 and R35. Residues G32 and R35 each coordinate CTP. Positions 45 and 47 each coordinate Mg(2+). ATP is bound by residues R116, D159, R162, R165, and R168. CTP contacts are provided by R116, D159, R162, R165, and R168.

It belongs to the tRNA nucleotidyltransferase/poly(A) polymerase family. Bacterial CCA-adding enzyme type 3 subfamily. Homodimer. Requires Mg(2+) as cofactor.

It catalyses the reaction a tRNA precursor + 2 CTP + ATP = a tRNA with a 3' CCA end + 3 diphosphate. It carries out the reaction a tRNA with a 3' CCA end + 2 CTP + ATP = a tRNA with a 3' CCACCA end + 3 diphosphate. Its function is as follows. Catalyzes the addition and repair of the essential 3'-terminal CCA sequence in tRNAs without using a nucleic acid template. Adds these three nucleotides in the order of C, C, and A to the tRNA nucleotide-73, using CTP and ATP as substrates and producing inorganic pyrophosphate. tRNA 3'-terminal CCA addition is required both for tRNA processing and repair. Also involved in tRNA surveillance by mediating tandem CCA addition to generate a CCACCA at the 3' terminus of unstable tRNAs. While stable tRNAs receive only 3'-terminal CCA, unstable tRNAs are marked with CCACCA and rapidly degraded. The chain is CCA-adding enzyme from Limosilactobacillus reuteri (strain DSM 20016) (Lactobacillus reuteri).